Consider the following 547-residue polypeptide: MEDEDKTAECQHSKPPTGITHEAPPHHELQEERVMSLRGTDRSEPTEGSNLLTSGEKKPQDSPTEPNGLQSLRRFLACPPRGCLARVITNGTMVVLLWAMVWSVTGPECLPGGNLFGIIILFYCSITGGKLFGLIKFPTLPPLPPLLGMLLAGFLLRNIPVINDSVRIQHKWSSSLRSIALSVILVRAGLGLDSKALRKLKGVCVRLAMGPCIVEACASAILSHFLMGLPWQWGFILGFVVGAVSPAVVVPSMLLLQEGGYGVGKGIPTLLMAAGSFDDILAITGFNTCLGVAFSTGSTVFNIFRGILEVVIGVAAGSFLGFFIQYFPSRDQDNLVWKRAFLVLGFAVLAVFSSVYFSFPGSGGLCTLVMAFLAGMRWTDKKSEVEKVIAVTWDVFQPLLFGLIGAEVSIVSLRAETVGLCVATLSIAVLIRILTTFLMVCFAGFNIKEKIFISFAWLPKATVQAAIGSVALDTARSHGEKQLEDYGMDVLTVAFLAILITAPIGSLLIGLLGPRVLQKSEHRTEEEVQGETSAHIQRKPEDSITEA.

The tract at residues 1 to 68 (MEDEDKTAEC…PQDSPTEPNG (68 aa)) is disordered. The Cytoplasmic segment spans residues 1-86 (MEDEDKTAEC…ACPPRGCLAR (86 aa)). The span at 23–45 (APPHHELQEERVMSLRGTDRSEP) shows a compositional bias: basic and acidic residues. Residue serine 49 is modified to Phosphoserine. A helical membrane pass occupies residues 87-104 (VITNGTMVVLLWAMVWSV). Residues 105–113 (TGPECLPGG) are Extracellular-facing. A helical membrane pass occupies residues 114 to 133 (NLFGIIILFYCSITGGKLFG). Topologically, residues 134–144 (LIKFPTLPPLP) are cytoplasmic. Residues 145–161 (PLLGMLLAGFLLRNIPV) traverse the membrane as a helical segment. Residues 162 to 171 (INDSVRIQHK) lie on the Extracellular side of the membrane. A helical transmembrane segment spans residues 172 to 189 (WSSSLRSIALSVILVRAG). Over 190–200 (LGLDSKALRKL) the chain is Cytoplasmic. The chain crosses the membrane as a helical span at residues 201 to 227 (KGVCVRLAMGPCIVEACASAILSHFLM). The Extracellular portion of the chain corresponds to 228–233 (GLPWQW). Residues 234-242 (GFILGFVVG) traverse the membrane as a helical segment. Topologically, residues 243–270 (AVSPAVVVPSMLLLQEGGYGVGKGIPTL) are cytoplasmic. 4 residues coordinate Na(+): valine 244, glycine 275, aspartate 278, and aspartate 279. Residues 271 to 290 (LMAAGSFDDILAITGFNTCL) traverse the membrane as a helical segment. The Extracellular portion of the chain corresponds to 291 to 300 (GVAFSTGSTV). A helical membrane pass occupies residues 301–324 (FNIFRGILEVVIGVAAGSFLGFFI). Residues 325-339 (QYFPSRDQDNLVWKR) lie on the Cytoplasmic side of the membrane. The helical transmembrane segment at 340–357 (AFLVLGFAVLAVFSSVYF) threads the bilayer. Residues 358–361 (SFPG) are Extracellular-facing. The chain crosses the membrane as a helical span at residues 362–373 (SGGLCTLVMAFL). The Cytoplasmic segment spans residues 374 to 390 (AGMRWTDKKSEVEKVIA). The helical transmembrane segment at 391–411 (VTWDVFQPLLFGLIGAEVSIV) threads the bilayer. Over 412–417 (SLRAET) the chain is Extracellular. Residues 418–440 (VGLCVATLSIAVLIRILTTFLMV) form a helical membrane-spanning segment. The Cytoplasmic portion of the chain corresponds to 441–461 (CFAGFNIKEKIFISFAWLPKA). A helical transmembrane segment spans residues 462-473 (TVQAAIGSVALD). The Extracellular segment spans residues 474 to 486 (TARSHGEKQLEDY). A helical membrane pass occupies residues 487–509 (GMDVLTVAFLAILITAPIGSLLI). At 510 to 547 (GLLGPRVLQKSEHRTEEEVQGETSAHIQRKPEDSITEA) the chain is on the cytoplasmic side. Positions 522 to 547 (HRTEEEVQGETSAHIQRKPEDSITEA) are disordered. The span at 538–547 (RKPEDSITEA) shows a compositional bias: basic and acidic residues.

It belongs to the monovalent cation:proton antiporter 1 (CPA1) transporter (TC 2.A.36) family. In terms of assembly, homodimer; dimerization is essential for SLC9B2 activity. Lipids seem to play a role in the stabilization of the dimerization subdomain. As to expression, widely expressed. However expression seems to be restricted to specific cell types within individual organs, e.g. osteoclasts in the bone, distal tubules of the kidney or beta-cells of Langerhans islets. In sperm specifically present in the principal piece of sperm tail (at protein level).

The protein resides in the cell membrane. Its subcellular location is the mitochondrion membrane. The protein localises to the endosome membrane. It is found in the lysosome membrane. It localises to the recycling endosome membrane. The protein resides in the cytoplasmic vesicle. Its subcellular location is the secretory vesicle. The protein localises to the synaptic vesicle membrane. It is found in the cell projection. It localises to the cilium. The protein resides in the flagellum membrane. Its subcellular location is the basolateral cell membrane. The protein localises to the apical cell membrane. It catalyses the reaction Na(+)(in) + H(+)(out) = Na(+)(out) + H(+)(in). It carries out the reaction Li(+)(out) + H(+)(in) = Li(+)(in) + H(+)(out). The enzyme catalyses Li(+)(in) + Na(+)(out) = Li(+)(out) + Na(+)(in). Its activity is regulated as follows. Allosterically inhibited by the N-terminal domain. Inhibited by phloretin. In terms of biological role, electroneutral Na(+) Li(+)/H(+) antiporter that extrudes Na(+) or Li(+) in exchange for external protons across the membrane. Uses the proton gradient/membrane potential to extrude sodium. Contributes to the regulation of intracellular pH and sodium homeostasis. Also able to mediate Na(+)/Li(+) antiporter activity in kidney. May play a physiological role in renal tubular function and blood pressure homeostasis. Plays an important role for insulin secretion and clathrin-mediated endocytosis in beta-cells. Involved in sperm motility and fertility. It is controversial whether SLC9B2 plays a role in osteoclast differentiation or not. This Mus musculus (Mouse) protein is Sodium/hydrogen exchanger 9B2.